A 655-amino-acid chain; its full sequence is Integrin beta-5 (655 aa).

One can recognise a VWFA domain in the interval 1–234 (DLSLSMKDDL…QLIINAYNSI (234 aa)). Topologically, residues 1–575 (DLSLSMKDDL…REPECGNTPN (575 aa)) are extracellular. Mg(2+)-binding residues include Ser3 and Ser5. Residues Ser5, Asp8, Asp9, and Asp40 each coordinate Ca(2+). Residues Cys58 and Cys67 are joined by a disulfide bond. The Ca(2+) site is built by Asn98, Asp100, Pro102, and Glu103. Glu103 contacts Mg(2+). Residues Cys115 and Cys156 are joined by a disulfide bond. Asn203 carries N-linked (GlcNAc...) asparagine glycosylation. Residue Gly218 coordinates Ca(2+). Disulfide bonds link Cys257-Cys269, Cys289-Cys317, Cys321-Cys340, Cys332-Cys343, Cys345-Cys354, Cys356-Cys386, Cys369-Cys384, Cys378-Cys389, Cys391-Cys404, Cys406-Cys427, Cys411-Cys425, Cys419-Cys430, and Cys432-Cys441. Residue Asn316 is glycosylated (N-linked (GlcNAc...) asparagine). I-EGF domains follow at residues 321–355 (CSVGLEPNSARCSGTGTYVCGLCECSPGYLGTRCE), 356–405 (CQDG…PFCE), 406–442 (CDNFSCARNKGVLCSGHGECHCGECKCHAGYIGDNCN), and 443–482 (CSTDISTCRGRDGQICSERGHCLCGQCQCTEPGAFGEMCE). Asn408 carries an N-linked (GlcNAc...) asparagine glycan. Asn442 carries N-linked (GlcNAc...) asparagine glycosylation. Disulfide bonds link Cys443–Cys466, Cys450–Cys464, Cys458–Cys469, Cys471–Cys481, Cys484–Cys487, Cys491–Cys538, Cys497–Cys517, Cys500–Cys513, and Cys546–Cys570. Residues Asn510 and Asn561 are each glycosylated (N-linked (GlcNAc...) asparagine). A helical membrane pass occupies residues 576–598 (AMTILLAVVGSILLVGLALLAIW). Over 599–655 (KLLVTIHDRREFAKFQSERSRARYEMASNPLYRKPISTHTVDFTFNKFNKSYNGTVD) the chain is Cytoplasmic. The residue at position 626 (Ser626) is a Phosphoserine.

It belongs to the integrin beta chain family. In terms of assembly, heterodimer of an alpha and a beta subunit. Beta-5 (ITGB5) associates with alpha-V (ITGAV). Interacts with MYO10. Interacts with DAB2. Integrin ITGAV:ITGB5 interacts with FBLN5 (via N-terminus). ITGAV:ITGB5 interacts with CCN3. Interacts with tensin TNS3; TNS3 also interacts with PEAK1, thus acting as an adapter molecule to bridge the association of PEAK1 with ITGB5.

The protein localises to the cell membrane. Functionally, integrin alpha-V/beta-5 (ITGAV:ITGB5) is a receptor for fibronectin. It recognizes the sequence R-G-D in its ligand. The chain is Integrin beta-5 (ITGB5) from Papio cynocephalus (Yellow baboon).